The chain runs to 314 residues: tRNA-cytidine(32) 2-sulfurtransferase (314 aa).

Residues 58 to 63 (SGGKDS) carry the PP-loop motif motif. Cys133, Cys136, and Cys224 together coordinate [4Fe-4S] cluster.

This sequence belongs to the TtcA family. In terms of assembly, homodimer. The cofactor is Mg(2+). It depends on [4Fe-4S] cluster as a cofactor.

It is found in the cytoplasm. It carries out the reaction cytidine(32) in tRNA + S-sulfanyl-L-cysteinyl-[cysteine desulfurase] + AH2 + ATP = 2-thiocytidine(32) in tRNA + L-cysteinyl-[cysteine desulfurase] + A + AMP + diphosphate + H(+). It functions in the pathway tRNA modification. In terms of biological role, catalyzes the ATP-dependent 2-thiolation of cytidine in position 32 of tRNA, to form 2-thiocytidine (s(2)C32). The sulfur atoms are provided by the cysteine/cysteine desulfurase (IscS) system. This is tRNA-cytidine(32) 2-sulfurtransferase from Polaromonas naphthalenivorans (strain CJ2).